Reading from the N-terminus, the 483-residue chain is Probable 4-hydroxyphenylacetate 3-monooxygenase (483 aa).

Residues 104–108 (RSPDY) and His150 each bind substrate. Residues 150-152 (HTF), 156-159 (QVNR), and Thr193 contribute to the FAD site. Residue 206–207 (AP) participates in substrate binding. FAD is bound at residue 452 to 455 (DPIR).

This sequence belongs to the FADH(2)-utilizing monooxygenase family.

The catalysed reaction is 4-hydroxyphenylacetate + FADH2 + O2 = 3,4-dihydroxyphenylacetate + FAD + H2O + H(+). Its pathway is aromatic compound metabolism; 4-hydroxyphenylacetate degradation; pyruvate and succinate semialdehyde from 4-hydroxyphenylacetate: step 1/7. Functionally, catalyzes the hydroxylation of 4-hydroxyphenylacetic acid (4HPA), leading to the production of 3,4-dihydroxyphenylacetic acid (DHPA). The polypeptide is Probable 4-hydroxyphenylacetate 3-monooxygenase (yoaI) (Bacillus subtilis (strain 168)).